Consider the following 565-residue polypeptide: O-fucosyltransferase 7 (565 aa).

Residues 17 to 37 form a helical; Signal-anchor for type II membrane protein membrane-spanning segment; it reads VLIWAICVMTLLCFLTVHIYV. Asn-62, Asn-73, Asn-104, Asn-124, and Asn-190 each carry an N-linked (GlcNAc...) asparagine glycan. Residue 327-329 participates in substrate binding; it reads HLR. The N-linked (GlcNAc...) asparagine glycan is linked to Asn-441. The disordered stretch occupies residues 515–565; that stretch reads NEIHKTRQGSPRRRKGPASGTKGLERHRSEESFYENPLPDCLCQRDPSKAR. Positions 520-530 are enriched in basic residues; sequence TRQGSPRRRKG.

It belongs to the glycosyltransferase GT106 family.

The protein localises to the membrane. It participates in glycan metabolism. The sequence is that of O-fucosyltransferase 7 from Arabidopsis thaliana (Mouse-ear cress).